Consider the following 345-residue polypeptide: MSSNSSLLVAVQLCYANVNGSCVKIPFSPGSRVILYIVFGFGAVLAVFGNLLVMISILHFKQLHSPTNFLVASLACADFLVGVTVMPFSMVRTVESCWYFGRSFCTFHTCCDVAFCYSSLFHLCFISIDRYIAVTDPLVYPTKFTVSVSGICISVSWILPLMYSGAVFYTGVYDDGLEELSDALNCIGGCQTVVNQNWVLTDFLSFFIPTFIMIILYGNIFLVARRQAKKIENTGSKTESSSESYKARVARRERKAAKTLGVTVVAFMISWLPYSIDSLIDAFMGFITPACIYEICCWCAYYNSAMNPLIYALFYPWFRKAIKVIVTGQVLKNSSATMNLFSEHI.

Over 1–32 (MSSNSSLLVAVQLCYANVNGSCVKIPFSPGSR) the chain is Extracellular. 2 N-linked (GlcNAc...) asparagine glycosylation sites follow: Asn-4 and Asn-19. Cystine bridges form between Cys-22–Cys-186 and Cys-105–Cys-190. The chain crosses the membrane as a helical span at residues 33–53 (VILYIVFGFGAVLAVFGNLLV). Topologically, residues 54–68 (MISILHFKQLHSPTN) are cytoplasmic. A helical membrane pass occupies residues 69 to 89 (FLVASLACADFLVGVTVMPFS). At 90 to 107 (MVRTVESCWYFGRSFCTF) the chain is on the extracellular side. The helical transmembrane segment at 108 to 128 (HTCCDVAFCYSSLFHLCFISI) threads the bilayer. The Cytoplasmic portion of the chain corresponds to 129-147 (DRYIAVTDPLVYPTKFTVS). A helical transmembrane segment spans residues 148–168 (VSGICISVSWILPLMYSGAVF). Over 169–202 (YTGVYDDGLEELSDALNCIGGCQTVVNQNWVLTD) the chain is Extracellular. A helical membrane pass occupies residues 203 to 223 (FLSFFIPTFIMIILYGNIFLV). Residues 224–259 (ARRQAKKIENTGSKTESSSESYKARVARRERKAAKT) lie on the Cytoplasmic side of the membrane. Residues 260 to 276 (LGVTVVAFMISWLPYSI) traverse the membrane as a helical segment. The Extracellular portion of the chain corresponds to 277 to 282 (DSLIDA). The chain crosses the membrane as a helical span at residues 283-302 (FMGFITPACIYEICCWCAYY). The Cytoplasmic portion of the chain corresponds to 303–345 (NSAMNPLIYALFYPWFRKAIKVIVTGQVLKNSSATMNLFSEHI).

It belongs to the G-protein coupled receptor 1 family. As to expression, expressed at low abundance in various brain tissues, as well as in fetal liver, but not in the cerebellum or placenta. In the brain, comparable levels of expression in basal ganglia, frontal cortex, substantia nigra, amygdala and hippocampus, highest expression in hippocampus and lowest expression in basal ganglia.

It is found in the cell membrane. In terms of biological role, olfactory receptor specific for trace amines, such as beta-phenylethylamine (beta-PEA). Trace amine compounds are enriched in animal body fluids and act on trace amine-associated receptors (TAARs) to elicit both intraspecific and interspecific innate behaviors. Beta-PEA-binding causes a conformation change that triggers signaling via G(s)-class of G alpha proteins (GNAL or GNAS). The protein is Trace amine-associated receptor 6 of Homo sapiens (Human).